A 535-amino-acid chain; its full sequence is Interferon lambda receptor 1 (535 aa).

An N-terminal signal peptide occupies residues 1-20 (MWRADRWAPLLLFLLQSALG). At 21 to 227 (RPRLAPPRNV…FLEAPGDKRA (207 aa)) the chain is on the extracellular side. In terms of domain architecture, Fibronectin type-III spans 26–121 (PPRNVTLFSQ…ESRYLEYLFD (96 aa)). Asparagine 29, asparagine 36, and asparagine 52 each carry an N-linked (GlcNAc...) asparagine glycan. 3 cysteine pairs are disulfide-bonded: cysteine 73-cysteine 81, cysteine 85-cysteine 149, and cysteine 194-cysteine 216. Asparagine 141 carries an N-linked (GlcNAc...) asparagine glycan. The chain crosses the membrane as a helical span at residues 228–248 (VLAMPSLLLLLIAAVAAGVAW). The Cytoplasmic segment spans residues 249-535 (KIMKGNPWFQ…GRMLGDYLVR (287 aa)). Disordered stretches follow at residues 301 to 419 (NRPA…APCG) and 478 to 520 (VNNP…SSVQ). Acidic residues predominate over residues 321–336 (STEDEDEDTDYDDDGD). A compositionally biased stretch (basic and acidic residues) spans 350 to 360 (EKPRVMEHSET). Low complexity predominate over residues 376–396 (GSDGSSAWDSSDRSWSSTGDS). A compositionally biased stretch (basic and acidic residues) spans 397–414 (SYKDEVGSSSCLDRKEPD). Residues 482-503 (EGEEEQEDEEEEEEEEEEEDWE) show a composition bias toward acidic residues.

It belongs to the type II cytokine receptor family. Heterodimer with IL10RB. Post-translationally, ubiquitinated by FBXO45-containing E3 ligase leading to proteasomal degradation.

Its subcellular location is the membrane. In terms of biological role, the IFNLR1/IL10RB dimer is a receptor for the cytokine ligands IFNL2 and IFNL3 and mediates their antiviral activity. The ligand/receptor complex stimulate the activation of the JAK/STAT signaling pathway leading to the expression of IFN-stimulated genes (ISG), which contribute to the antiviral state. Determines the cell type specificity of the lambda interferon action. Shows a more restricted pattern of expression in the epithelial tissues thereby limiting responses to lambda interferons primarily to epithelial cells of the respiratory, gastrointestinal, and reproductive tracts. Seems not to be essential for early virus-activated host defense in vaginal infection, but plays an important role in Toll-like receptor (TLR)-induced antiviral defense. Plays a significant role in the antiviral immune defense in the intestinal epithelium. This is Interferon lambda receptor 1 (Ifnlr1) from Mus musculus (Mouse).